The following is a 630-amino-acid chain: Arginine--tRNA ligase (630 aa).

Positions 120 to 130 (ANPVHPLHIGH) match the 'HIGH' region motif.

The protein belongs to the class-I aminoacyl-tRNA synthetase family.

It localises to the cytoplasm. It carries out the reaction tRNA(Arg) + L-arginine + ATP = L-arginyl-tRNA(Arg) + AMP + diphosphate. In Pyrobaculum aerophilum (strain ATCC 51768 / DSM 7523 / JCM 9630 / CIP 104966 / NBRC 100827 / IM2), this protein is Arginine--tRNA ligase.